We begin with the raw amino-acid sequence, 832 residues long: Protein P (832 aa).

Residues Met-1–Gln-177 form a terminal protein domain (TP) region. The segment at Glu-178–Leu-335 is spacer. 2 stretches are compositionally biased toward polar residues: residues Ser-205–Gln-220 and Ser-251–Ser-263. The disordered stretch occupies residues Ser-205–Ser-263. Residues Glu-336–Gln-679 are polymerase/reverse transcriptase domain (RT). The Reverse transcriptase domain occupies Lys-346 to Ile-589. Residues Asp-418, Asp-540, and Asp-541 each coordinate Mg(2+).

This sequence belongs to the hepadnaviridae P protein family.

It carries out the reaction DNA(n) + a 2'-deoxyribonucleoside 5'-triphosphate = DNA(n+1) + diphosphate. The catalysed reaction is Endonucleolytic cleavage to 5'-phosphomonoester.. With respect to regulation, activated by host HSP70 and HSP40 in vitro to be able to bind the epsilon loop of the pgRNA. Because deletion of the RNase H region renders the protein partly chaperone-independent, the chaperones may be needed indirectly to relieve occlusion of the RNA-binding site by this domain. Inhibited by several reverse-transcriptase inhibitors: Lamivudine, Adefovir and Entecavir. Functionally, multifunctional enzyme that converts the viral RNA genome into dsDNA in viral cytoplasmic capsids. This enzyme displays a DNA polymerase activity that can copy either DNA or RNA templates, and a ribonuclease H (RNase H) activity that cleaves the RNA strand of RNA-DNA heteroduplexes in a partially processive 3'- to 5'-endonucleasic mode. Neo-synthesized pregenomic RNA (pgRNA) are encapsidated together with the P protein, and reverse-transcribed inside the nucleocapsid. Initiation of reverse-transcription occurs first by binding the epsilon loop on the pgRNA genome, and is initiated by protein priming, thereby the 5'-end of (-)DNA is covalently linked to P protein. Partial (+)DNA is synthesized from the (-)DNA template and generates the relaxed circular DNA (RC-DNA) genome. After budding and infection, the RC-DNA migrates in the nucleus, and is converted into a plasmid-like covalently closed circular DNA (cccDNA). The activity of P protein does not seem to be necessary for cccDNA generation, and is presumably released from (+)DNA by host nuclear DNA repair machinery. The chain is Protein P from Gorilla gorilla (western gorilla).